A 138-amino-acid polypeptide reads, in one-letter code: Transcription antitermination protein NusB (138 aa).

It belongs to the NusB family.

Its function is as follows. Involved in transcription antitermination. Required for transcription of ribosomal RNA (rRNA) genes. Binds specifically to the boxA antiterminator sequence of the ribosomal RNA (rrn) operons. The protein is Transcription antitermination protein NusB of Leptospira interrogans serogroup Icterohaemorrhagiae serovar copenhageni (strain Fiocruz L1-130).